The following is a 437-amino-acid chain: Type II methyltransferase M.HgiBI (437 aa).

Residues 4–431 (FRFIDLFAGI…KALQCVKLFE (428 aa)) form the SAM-dependent MTase C5-type domain. The active site involves Cys-75.

It belongs to the class I-like SAM-binding methyltransferase superfamily. C5-methyltransferase family.

The catalysed reaction is a 2'-deoxycytidine in DNA + S-adenosyl-L-methionine = a 5-methyl-2'-deoxycytidine in DNA + S-adenosyl-L-homocysteine + H(+). A methylase that recognizes the double-stranded sequence 5'-GGWCC-3', methylates C-? on both strands, and protects the DNA from cleavage by the HgiBI endonuclease. This system is less active than isoschizomeric RM.HgiEI. The protein is Type II methyltransferase M.HgiBI of Herpetosiphon aurantiacus (Herpetosiphon giganteus).